Here is a 341-residue protein sequence, read N- to C-terminus: MATNIAINGMGRIGRMVLRIALNNKNLNVKAINASYPPETIAHLLNYDTTHGVYDKKVEPIESGIKVNGHEIKLLSDRNPENLPWNEMDIDVVIEATGKFNHGDKAVAHINAGAKKVLLTGPSKGGDVQMIVKGVNDNQLDIDTYDIFSNASCTTNCIGPVAKVLNDKFGIINGLMTTVHAITNDQKNIDNPHKDLRRARSCNESIIPTSTGAAKALKEVLPEVEGKLHGMALRVPTKNVSLVDLVVDLEQNVTVTQVNDAFKNADLSGVLDVEEAPLVSVDFNTNPHSAIIDSQSTMVMGQNKVKVIAWYDNEWGYSNRVVEVAVKIGQLIDDKAMVKAI.

NAD(+)-binding positions include 12 to 13, Arg78, and Thr120; that span reads RI. Residues 152–154 and Thr183 contribute to the D-glyceraldehyde 3-phosphate site; that span reads SCT. Residue Cys153 is the Nucleophile of the active site. Asn184 contacts NAD(+). Residues Arg198, 211 to 212, and Arg234 contribute to the D-glyceraldehyde 3-phosphate site; that span reads TG. Asn313 contributes to the NAD(+) binding site.

The protein belongs to the glyceraldehyde-3-phosphate dehydrogenase family. Homotetramer.

The protein localises to the cytoplasm. The catalysed reaction is D-glyceraldehyde 3-phosphate + phosphate + NAD(+) = (2R)-3-phospho-glyceroyl phosphate + NADH + H(+). The protein operates within carbohydrate degradation; glycolysis; pyruvate from D-glyceraldehyde 3-phosphate: step 1/5. Functionally, catalyzes the oxidative phosphorylation of glyceraldehyde 3-phosphate (G3P) to 1,3-bisphosphoglycerate (BPG) using the cofactor NAD. The first reaction step involves the formation of a hemiacetal intermediate between G3P and a cysteine residue, and this hemiacetal intermediate is then oxidized to a thioester, with concomitant reduction of NAD to NADH. The reduced NADH is then exchanged with the second NAD, and the thioester is attacked by a nucleophilic inorganic phosphate to produce BPG. The protein is Glyceraldehyde-3-phosphate dehydrogenase 2 (gapA2) of Staphylococcus epidermidis (strain ATCC 12228 / FDA PCI 1200).